We begin with the raw amino-acid sequence, 129 residues long: NADPH-dependent 7-cyano-7-deazaguanine reductase (129 aa).

Cys42 serves as the catalytic Thioimide intermediate. Asp49 functions as the Proton donor in the catalytic mechanism. Residues 64 to 66 (VEL) and 83 to 84 (HE) contribute to the substrate site.

Belongs to the GTP cyclohydrolase I family. QueF type 1 subfamily.

Its subcellular location is the cytoplasm. It catalyses the reaction 7-aminomethyl-7-carbaguanine + 2 NADP(+) = 7-cyano-7-deazaguanine + 2 NADPH + 3 H(+). It participates in tRNA modification; tRNA-queuosine biosynthesis. Its function is as follows. Catalyzes the NADPH-dependent reduction of 7-cyano-7-deazaguanine (preQ0) to 7-aminomethyl-7-deazaguanine (preQ1). In Synechococcus sp. (strain CC9605), this protein is NADPH-dependent 7-cyano-7-deazaguanine reductase.